Consider the following 116-residue polypeptide: Large ribosomal subunit protein bL19 (116 aa).

Belongs to the bacterial ribosomal protein bL19 family.

In terms of biological role, this protein is located at the 30S-50S ribosomal subunit interface and may play a role in the structure and function of the aminoacyl-tRNA binding site. The polypeptide is Large ribosomal subunit protein bL19 (Haemophilus ducreyi (strain 35000HP / ATCC 700724)).